Consider the following 255-residue polypeptide: tRNA (guanine-N(7)-)-methyltransferase (255 aa).

The disordered stretch occupies residues 1–21 (MMHDDPNEAGLPPHDDAIPDE). Positions 86, 111, 138, and 161 each coordinate S-adenosyl-L-methionine. Asp161 is an active-site residue. Substrate-binding positions include Lys165, Asp197, and 232 to 235 (TKFE).

It belongs to the class I-like SAM-binding methyltransferase superfamily. TrmB family.

It carries out the reaction guanosine(46) in tRNA + S-adenosyl-L-methionine = N(7)-methylguanosine(46) in tRNA + S-adenosyl-L-homocysteine. Its pathway is tRNA modification; N(7)-methylguanine-tRNA biosynthesis. Catalyzes the formation of N(7)-methylguanine at position 46 (m7G46) in tRNA. The chain is tRNA (guanine-N(7)-)-methyltransferase from Burkholderia lata (strain ATCC 17760 / DSM 23089 / LMG 22485 / NCIMB 9086 / R18194 / 383).